Here is a 914-residue protein sequence, read N- to C-terminus: Alanine--tRNA ligase (914 aa).

Zn(2+)-binding residues include H613, H617, C717, and H721.

This sequence belongs to the class-II aminoacyl-tRNA synthetase family. Zn(2+) serves as cofactor.

The protein resides in the cytoplasm. The enzyme catalyses tRNA(Ala) + L-alanine + ATP = L-alanyl-tRNA(Ala) + AMP + diphosphate. Functionally, catalyzes the attachment of alanine to tRNA(Ala) in a two-step reaction: alanine is first activated by ATP to form Ala-AMP and then transferred to the acceptor end of tRNA(Ala). Also edits incorrectly charged Ser-tRNA(Ala) and Gly-tRNA(Ala) via its editing domain. The sequence is that of Alanine--tRNA ligase from Pyrococcus furiosus (strain ATCC 43587 / DSM 3638 / JCM 8422 / Vc1).